A 1279-amino-acid polypeptide reads, in one-letter code: Sterol regulatory element-binding protein cleavage-activating protein (1279 aa).

At Met-1–His-18 the chain is on the cytoplasmic side. Residues Gly-19 to Ala-39 traverse the membrane as a helical segment. Topologically, residues Cys-40–Glu-279 are lumenal. The segment at Lys-46–Glu-284 is loop-1. Residues Pro-60–Gln-81 form a disordered region. N-linked (GlcNAc...) asparagine glycosylation occurs at Asn-263. Residues Ile-280–Tyr-300 form a helical membrane-spanning segment. Positions Glu-284–Ile-442 constitute an SSD domain. At Phe-301–Lys-312 the chain is on the cytoplasmic side. A helical transmembrane segment spans residues Trp-313–Leu-333. The Lumenal portion of the chain corresponds to Cys-334–Asn-344. Residues Gly-345 to Thr-365 traverse the membrane as a helical segment. At Lys-366 to Gly-401 the chain is on the cytoplasmic side. Residues Ile-402–Val-422 traverse the membrane as a helical segment. Position 423 (Val-423) is a topological domain, lumenal. The helical transmembrane segment at Gly-424 to Ile-444 threads the bilayer. At Arg-445 to Arg-518 the chain is on the cytoplasmic side. Positions Met-447–Leu-452 match the ER export signal motif. Residues Lys-454 and Lys-466 each participate in a glycyl lysine isopeptide (Lys-Gly) (interchain with G-Cter in ubiquitin) cross-link. The helical transmembrane segment at Leu-519–Leu-539 threads the bilayer. Positions Asp-535 to Lys-710 are loop-7. Residues Arg-540 to Thr-707 lie on the Lumenal side of the membrane. The segment at Leu-588–Trp-617 is disordered. Residues Asn-590 and Asn-641 are each glycosylated (N-linked (GlcNAc...) asparagine). A disordered region spans residues Glu-668–Gly-696. Residues Leu-708–Leu-728 traverse the membrane as a helical segment. Topologically, residues Tyr-729 to Asp-1279 are cytoplasmic. Residues Arg-730–Asp-1279 are interaction with SREBF2. The stretch at Val-770–Arg-810 is one WD 1 repeat. Ser-821, Ser-837, Ser-843, and Ser-850 each carry phosphoserine. Disordered regions lie at residues Glu-834–Asp-868, His-883–Thr-903, and Val-925–Ser-959. Over residues Arg-885 to His-896 the composition is skewed to basic and acidic residues. Residues Thr-929 to Thr-944 are compositionally biased toward pro residues. A Phosphoserine modification is found at Ser-936. WD repeat units lie at residues Pro-952–Ser-1002 and Glu-1005–Pro-1042. Residue Arg-1051 is modified to Omega-N-methylarginine. WD repeat units lie at residues Ala-1077 to Thr-1114, Gly-1117 to His-1155, Ala-1158 to Ser-1195, and Gln-1197 to Thr-1235.

The protein belongs to the WD repeat SCAP family. As to quaternary structure, membrane region forms a homotetramer. Component of the SCAP-SREBP complex (composed of SCAP and SREBF1/SREBP1 or SREBF2/SREBP2); interacts with SREBF1/SREBP1 or SREBF2/SREBP2 through its C-terminal cytoplasmic domain. Forms a ternary complex with INSIG1 or INSIG2 through its transmembrane domains at high sterol concentrations. Interacts with PAQR3; the interaction anchors the SCAP-SREBP complex to the Golgi apparatus in low cholesterol conditions. Interacts with the SEC23-SEC24 complex in a SAR1-GTP-dependent manner through an ER export signal in its third cytoplasmic loop. Interacts with RNF139; the interaction inhibits the interaction of SCAP with SEC24B and hampering the ER to Golgi transport of the SCAP-SREBP complex. Interacts with SPRING1. In terms of processing, ubiquitinated at Lys-454 and Lys-466. RNF145 triggers ubiquitination of SCAP, likely inhibiting SCAP-SREBP complex transport to the Golgi apparatus and the subsequent processing/maturation of SREBF2/SREBP2. Widely expressed with higher levels in lung, kidney, gut, brain and adipose tissue. In terms of tissue distribution, expressed in liver and muscle. Isoform 3 expressed in testis. As to expression, expressed in testis.

It localises to the endoplasmic reticulum membrane. The protein localises to the golgi apparatus membrane. The protein resides in the cytoplasmic vesicle. Its subcellular location is the COPII-coated vesicle membrane. Its function is as follows. Escort protein required for cholesterol as well as lipid homeostasis. Regulates export of the SCAP-SREBP complex from the endoplasmic reticulum to the Golgi upon low cholesterol, thereby regulating the processing of sterol regulatory element-binding proteins (SREBPs) SREBF1/SREBP1 and SREBF2/SREBP2. At high sterol concentrations, formation of a ternary complex with INSIG (INSIG1 or INSIG2) leads to mask the ER export signal in SCAP, promoting retention of the complex in the endoplasmic reticulum. Low sterol concentrations trigger release of INSIG, a conformational change in the SSD domain of SCAP, unmasking of the ER export signal, promoting recruitment into COPII-coated vesicles and transport of the SCAP-SREBP to the Golgi: in the Golgi, SREBPs are then processed, releasing the transcription factor fragment of SREBPs from the membrane, its import into the nucleus and up-regulation of LDLR, INSIG1 and the mevalonate pathway. Binds cholesterol via its SSD domain. This chain is Sterol regulatory element-binding protein cleavage-activating protein, found in Sus scrofa (Pig).